The following is a 548-amino-acid chain: Folylpolyglutamate synthase (548 aa).

130–133 (GKGS) is an ATP binding site. Residues Ser-157, Glu-234, and His-262 each contribute to the Mg(2+) site. The ATP site is built by Arg-382 and Asp-396.

It belongs to the folylpolyglutamate synthase family. Requires a monovalent cation as cofactor.

Its subcellular location is the mitochondrion inner membrane. It is found in the mitochondrion matrix. It localises to the cytoplasm. It catalyses the reaction (6S)-5,6,7,8-tetrahydrofolyl-(gamma-L-Glu)(n) + L-glutamate + ATP = (6S)-5,6,7,8-tetrahydrofolyl-(gamma-L-Glu)(n+1) + ADP + phosphate + H(+). Its pathway is cofactor biosynthesis; tetrahydrofolylpolyglutamate biosynthesis. Its function is as follows. Catalyzes conversion of folates to polyglutamate derivatives allowing concentration of folate compounds in the cell and the intracellular retention of these cofactors, which are important substrates for most of the folate-dependent enzymes that are involved in one-carbon transfer reactions involved in purine, pyrimidine and amino acid synthesis. Required for methionine synthesis and maintenance of intact mitochondrial DNA. Involved in telomere maintenance. The sequence is that of Folylpolyglutamate synthase from Saccharomyces cerevisiae (strain RM11-1a) (Baker's yeast).